The following is a 142-amino-acid chain: Large ribosomal subunit protein uL13 (142 aa).

The protein belongs to the universal ribosomal protein uL13 family. Part of the 50S ribosomal subunit.

This protein is one of the early assembly proteins of the 50S ribosomal subunit, although it is not seen to bind rRNA by itself. It is important during the early stages of 50S assembly. The chain is Large ribosomal subunit protein uL13 from Agathobacter rectalis (strain ATCC 33656 / DSM 3377 / JCM 17463 / KCTC 5835 / VPI 0990) (Eubacterium rectale).